The chain runs to 289 residues: UPF0276 protein BB1291 (289 aa).

This sequence belongs to the UPF0276 family.

The polypeptide is UPF0276 protein BB1291 (Bordetella bronchiseptica (strain ATCC BAA-588 / NCTC 13252 / RB50) (Alcaligenes bronchisepticus)).